A 341-amino-acid polypeptide reads, in one-letter code: Protein pelota homolog (341 aa).

This sequence belongs to the eukaryotic release factor 1 family. Pelota subfamily. Monomer. The cofactor is a divalent metal cation.

The protein resides in the cytoplasm. In terms of biological role, may function in recognizing stalled ribosomes, interact with stem-loop structures in stalled mRNA molecules, and effect endonucleolytic cleavage of the mRNA. May play a role in the release non-functional ribosomes and degradation of damaged mRNAs. Has endoribonuclease activity. The polypeptide is Protein pelota homolog (Methanoregula boonei (strain DSM 21154 / JCM 14090 / 6A8)).